Consider the following 158-residue polypeptide: NKG2-F type II integral membrane protein (158 aa).

Over residues 1–12 the composition is skewed to polar residues; the sequence is MNKQRGTYSEVS. Positions 1 to 25 are disordered; it reads MNKQRGTYSEVSLAQDPKRQQRKLK. The Cytoplasmic segment spans residues 1–74; that stretch reads MNKQRGTYSE…LPPPEKLTAE (74 aa). A helical; Signal-anchor for type II membrane protein transmembrane segment spans residues 75–95; it reads VLGIICIVLMATVLKTIVLIP. Topologically, residues 96–158 are extracellular; that stretch reads CIGVLEQNNF…VLRRTLICFL (63 aa).

In terms of assembly, can form disulfide-bonded heterodimer with CD94. As to expression, natural killer cells.

The protein resides in the membrane. Its function is as follows. May play a role as a receptor for the recognition of MHC class I HLA-E molecules by NK cells. This is NKG2-F type II integral membrane protein (KLRC4) from Homo sapiens (Human).